The primary structure comprises 286 residues: MASYKFKTQNSFLLLLSISFFFLLLLNKVNSTGSLSFSFPKFKHSQPDLIFQSDALVTSKGVLQLTTVNDGRPVYDSIGRVLYAAPFQIWDSTTGNVASFVTSFSFIIKAPNEGKTADGLVFFLAPVGSTQPLKGGGLLGLFKDESYNKSNQIVAVEFDTFRNVAWDPNGIHMGIDVNSIQSVRTVRWDWANGEVANVFISYEASTKSLTASLVYPSLEKSFILSAIVDLKKVLPEWVRVGFTATTGLSEDYVQTNDVLSWSFESNLPGGNSVASVKNAGLSTYAA.

An N-terminal signal peptide occupies residues 1–31; it reads MASYKFKTQNSFLLLLSISFFFLLLLNKVNS. Asparagine 148 carries N-linked (GlcNAc...) asparagine glycosylation. Residues glutamate 157 and aspartate 159 each contribute to the Mn(2+) site. Ca(2+)-binding residues include aspartate 159, asparagine 163, and aspartate 167. Residues aspartate 167 and histidine 172 each contribute to the Mn(2+) site.

This sequence belongs to the leguminous lectin family. As to quaternary structure, RPbAI is composed of two polypeptides, A and B, that associate into five different tetrameric isolectins. The A4 combination is the only one devoid of agglutination activity. Isoform B4 displays maximal agglutination activity. Mostly in the axial and ray parenchymal cells of the inner bark. Fewer in the axial and ray parenchymal cells of the xylem. Strong expression in bark. The lectin accumulates in the inner bark in autumn and winter and disappears in may.

Functionally, bark lectins are storage proteins that probably maintain stocks of nitrogen during dormant period. Self-aggregatable molecules that can bind their own carbohydrate side chains. They could also play a role in the plant's defense against phytophagous invertebrates or herbivorous higher animals. The chain is Bark agglutinin I polypeptide B from Robinia pseudoacacia (Black locust).